A 347-amino-acid polypeptide reads, in one-letter code: Dolichyl-diphosphooligosaccharide--protein glycosyltransferase subunit TUSC3 (347 aa).

Residues 1-41 form the signal peptide; it reads MSARAAPSRRRQAGRRLRYLPTGSFPFLLLLLLLCIQLGGG. The Lumenal segment spans residues 42-196; the sequence is QKKKENLLAE…DVHIRVFRPP (155 aa). Positions 59 to 187 constitute a Thioredoxin domain; that stretch reads WSSRRSIFRM…LAKWIADRTD (129 aa). N-linked (GlcNAc...) asparagine glycosylation occurs at Asn83. An intrachain disulfide couples Cys99 to Cys102. A helical transmembrane segment spans residues 197–217; it reads NYSGTIALALLVSLVGGLLYL. Over 218–221 the chain is Cytoplasmic; the sequence is RRNN. The helical transmembrane segment at 222–242 threads the bilayer; that stretch reads LEFIYNKTGWAMVSLCIVFAM. Residues 243–276 lie on the Lumenal side of the membrane; sequence TSGQMWNHIRGPPYAHKNPHNGQVSYIHGSSQAQ. A helical transmembrane segment spans residues 277-297; it reads FVAESHIILVLNAAITMGMVL. Residues 298 to 312 are Cytoplasmic-facing; that stretch reads LNEAATSKGDVGKRR. A helical membrane pass occupies residues 313-333; that stretch reads IICLVGLGLVVFFFSFLLSIF. At 334 to 347 the chain is on the lumenal side; that stretch reads RSKYHGYPYSFLIK.

The protein belongs to the OST3/OST6 family. Accessory component of the STT3B-containing form of the oligosaccharyltransferase (OST) complex. OST exists in two different complex forms which contain common core subunits RPN1, RPN2, OST48, OST4, DAD1 and TMEM258, either STT3A or STT3B as catalytic subunits, and form-specific accessory subunits. OST can form stable complexes with the Sec61 complex or with both the Sec61 and TRAP complexes. The association of TUSC3 or MAGT1 with the STT3B-containing complex seems to be mutually exclusvice.

The protein resides in the endoplasmic reticulum membrane. The protein operates within protein modification; protein glycosylation. Functionally, acts as accessory component of the N-oligosaccharyl transferase (OST) complex which catalyzes the transfer of a high mannose oligosaccharide from a lipid-linked oligosaccharide donor to an asparagine residue within an Asn-X-Ser/Thr consensus motif in nascent polypeptide chains. Involved in N-glycosylation of STT3B-dependent substrates. Specifically required for the glycosylation of a subset of acceptor sites that are near cysteine residues; in this function seems to act redundantly with MAGT1. In its oxidized form proposed to form transient mixed disulfides with a glycoprotein substrate to facilitate access of STT3B to the unmodified acceptor site. Also has oxidoreductase-independent functions in the STT3B-containing OST complex possibly involving substrate recognition. Could indirectly play a role in Mg(2+) transport. In Mus musculus (Mouse), this protein is Dolichyl-diphosphooligosaccharide--protein glycosyltransferase subunit TUSC3 (Tusc3).